We begin with the raw amino-acid sequence, 92 residues long: MTDTDVQAPKIEFPCERYPIKVIGDAGEGFADLVVEVIQRHAPDLDSSTLRLRDSRNGRFLSVQVLITATGVEQLQAIHLDLRATGRVHMVL.

It belongs to the UPF0250 family.

In Azotobacter vinelandii (strain DJ / ATCC BAA-1303), this protein is UPF0250 protein Avin_08440.